Reading from the N-terminus, the 253-residue chain is 5'-nucleotidase SurE (253 aa).

Residues D8, D9, S39, and N96 each contribute to the a divalent metal cation site.

This sequence belongs to the SurE nucleotidase family. The cofactor is a divalent metal cation.

The protein resides in the cytoplasm. It carries out the reaction a ribonucleoside 5'-phosphate + H2O = a ribonucleoside + phosphate. Nucleotidase that shows phosphatase activity on nucleoside 5'-monophosphates. The protein is 5'-nucleotidase SurE of Rhodopirellula baltica (strain DSM 10527 / NCIMB 13988 / SH1).